The chain runs to 2289 residues: Protein Ycf2 (2289 aa).

Residue 1643–1650 (GSIGTGRS) coordinates ATP.

The protein belongs to the Ycf2 family.

The protein localises to the plastid. The protein resides in the chloroplast stroma. Its function is as follows. Probable ATPase of unknown function. Its presence in a non-photosynthetic plant (Epifagus virginiana) and experiments in tobacco indicate that it has an essential function which is probably not related to photosynthesis. This Capsella bursa-pastoris (Shepherd's purse) protein is Protein Ycf2.